The sequence spans 761 residues: Copper-exporting P-type ATPase (761 aa).

Position 2 is an N-acetylthreonine (threonine 2). An HMA domain is found at 14-78; it reads QRIQLRISGM…AVRRAGYQAD (65 aa). The Cu(+) site is built by cysteine 25 and cysteine 28. 6 helical membrane-spanning segments follow: residues 102–122, 129–149, 164–184, 199–219, 361–381, and 387–407; these read LAIA…FGVV, GWQW…AWPF, METL…YTVF, LLGS…FVLV, VFVP…LIAG, and AVSA…GLAT. The 4-aspartylphosphate intermediate role is filled by aspartate 443. Helical transmembrane passes span 695–714 and 718–735; these read MVWA…AGLL and VAGA…SNSL.

The protein belongs to the cation transport ATPase (P-type) (TC 3.A.3) family. Type IB subfamily.

The protein resides in the cell membrane. It carries out the reaction Cu(+)(in) + ATP + H2O = Cu(+)(out) + ADP + phosphate + H(+). ATPase activity is stimulated by Cu(+) ions. In terms of biological role, involved in copper export. Could be involved in the copper detoxification of mycobacterial cells. The protein is Copper-exporting P-type ATPase (ctpA) of Mycobacterium tuberculosis (strain ATCC 25618 / H37Rv).